The following is a 366-amino-acid chain: Transcription factor bHLH74 (366 aa).

Residues 1–11 (MGGESNEGGEM) are compositionally biased toward gly residues. Disordered stretches follow at residues 1–20 (MGGE…DDES) and 123–201 (GESS…APKE). 2 stretches are compositionally biased toward basic and acidic residues: residues 123–134 (GESSHEDHHQVS) and 159–170 (KAVEEFQEDPQR). Residues 212–262 (QATNSHSLAERVRREKISERMRLLQELVPGCNKITGKAVMLDEIINYVQSL) form the bHLH domain.

In terms of assembly, homodimer. Interacts with IBH1. Binds reversibly to CRY2 after blue light illumination. Expressed constitutively in roots, leaves, stems, and flowers.

The protein resides in the nucleus. Transcriptional activator involved in cell elongation. Regulates the expression of a subset of genes involved in cell expansion by binding to the G-box motif. Binds to chromatin DNA of the FT gene and promotes its expression, and thus triggers flowering in response to blue light. The sequence is that of Transcription factor bHLH74 (BHLH74) from Arabidopsis thaliana (Mouse-ear cress).